We begin with the raw amino-acid sequence, 343 residues long: Photosystem II protein D1 (343 aa).

3 helical membrane-spanning segments follow: residues 28–45 (YIGW…VSTV), 117–132 (HFLA…EYEY), and 141–155 (WIYL…AASA). Residue His-117 coordinates chlorophyll a. Trp-125 contacts pheophytin a. [CaMn4O5] cluster is bound by residues Asp-169 and Glu-188. The chain crosses the membrane as a helical span at residues 196–217 (FHILGVSAVFGGSLFSAMHGSL). His-197 provides a ligand contact to chlorophyll a. A quinone contacts are provided by residues His-214 and 263–264 (SF). His-214 contributes to the Fe cation binding site. His-271 lines the Fe cation pocket. A helical membrane pass occupies residues 273–287 (FLAAWPVIGIWCTAI). Residues His-331, Glu-332, Asp-341, and Ala-343 each contribute to the [CaMn4O5] cluster site.

This sequence belongs to the reaction center PufL/M/PsbA/D family. In terms of assembly, PSII is composed of 1 copy each of membrane proteins PsbA, PsbB, PsbC, PsbD, PsbE, PsbF, PsbH, PsbI, PsbJ, PsbK, PsbL, PsbM, PsbT, PsbX, PsbY, PsbZ, Psb30/Ycf12, at least 3 peripheral proteins of the oxygen-evolving complex and a large number of cofactors. It forms dimeric complexes. The cofactor is The D1/D2 heterodimer binds P680, chlorophylls that are the primary electron donor of PSII, and subsequent electron acceptors. It shares a non-heme iron and each subunit binds pheophytin, quinone, additional chlorophylls, carotenoids and lipids. D1 provides most of the ligands for the Mn4-Ca-O5 cluster of the oxygen-evolving complex (OEC). There is also a Cl(-1) ion associated with D1 and D2, which is required for oxygen evolution. The PSII complex binds additional chlorophylls, carotenoids and specific lipids.. In terms of processing, tyr-160 forms a radical intermediate that is referred to as redox-active TyrZ, YZ or Y-Z.

The protein resides in the plastid. It is found in the chloroplast thylakoid membrane. The catalysed reaction is 2 a plastoquinone + 4 hnu + 2 H2O = 2 a plastoquinol + O2. Its function is as follows. Photosystem II (PSII) is a light-driven water:plastoquinone oxidoreductase that uses light energy to abstract electrons from H(2)O, generating O(2) and a proton gradient subsequently used for ATP formation. It consists of a core antenna complex that captures photons, and an electron transfer chain that converts photonic excitation into a charge separation. The D1/D2 (PsbA/PsbD) reaction center heterodimer binds P680, the primary electron donor of PSII as well as several subsequent electron acceptors. The polypeptide is Photosystem II protein D1 (Prorocentrum micans (Red tide dinoflagellate)).